The chain runs to 424 residues: 3-phosphoshikimate 1-carboxyvinyltransferase (424 aa).

The 3-phosphoshikimate site is built by K21, S22, and R26. K21 lines the phosphoenolpyruvate pocket. Phosphoenolpyruvate-binding residues include G92 and R120. 3-phosphoshikimate is bound by residues S163, S164, Q165, S191, D306, and K333. Residue Q165 coordinates phosphoenolpyruvate. D306 functions as the Proton acceptor in the catalytic mechanism. Phosphoenolpyruvate is bound by residues R337, R379, and K405.

Belongs to the EPSP synthase family. In terms of assembly, monomer.

Its subcellular location is the cytoplasm. The catalysed reaction is 3-phosphoshikimate + phosphoenolpyruvate = 5-O-(1-carboxyvinyl)-3-phosphoshikimate + phosphate. Its pathway is metabolic intermediate biosynthesis; chorismate biosynthesis; chorismate from D-erythrose 4-phosphate and phosphoenolpyruvate: step 6/7. In terms of biological role, catalyzes the transfer of the enolpyruvyl moiety of phosphoenolpyruvate (PEP) to the 5-hydroxyl of shikimate-3-phosphate (S3P) to produce enolpyruvyl shikimate-3-phosphate and inorganic phosphate. This is 3-phosphoshikimate 1-carboxyvinyltransferase from Clostridium perfringens (strain ATCC 13124 / DSM 756 / JCM 1290 / NCIMB 6125 / NCTC 8237 / Type A).